Here is a 183-residue protein sequence, read N- to C-terminus: ATP synthase subunit delta (183 aa).

This sequence belongs to the ATPase delta chain family. F-type ATPases have 2 components, F(1) - the catalytic core - and F(0) - the membrane proton channel. F(1) has five subunits: alpha(3), beta(3), gamma(1), delta(1), epsilon(1). F(0) has three main subunits: a(1), b(2) and c(10-14). The alpha and beta chains form an alternating ring which encloses part of the gamma chain. F(1) is attached to F(0) by a central stalk formed by the gamma and epsilon chains, while a peripheral stalk is formed by the delta and b chains.

The protein localises to the cell inner membrane. Its function is as follows. F(1)F(0) ATP synthase produces ATP from ADP in the presence of a proton or sodium gradient. F-type ATPases consist of two structural domains, F(1) containing the extramembraneous catalytic core and F(0) containing the membrane proton channel, linked together by a central stalk and a peripheral stalk. During catalysis, ATP synthesis in the catalytic domain of F(1) is coupled via a rotary mechanism of the central stalk subunits to proton translocation. This protein is part of the stalk that links CF(0) to CF(1). It either transmits conformational changes from CF(0) to CF(1) or is implicated in proton conduction. The protein is ATP synthase subunit delta of Verminephrobacter eiseniae (strain EF01-2).